A 535-amino-acid chain; its full sequence is T-complex protein 1 subunit zeta 1 (535 aa).

The protein belongs to the TCP-1 chaperonin family. As to quaternary structure, heterooligomeric complex of about 850 to 900 kDa that forms two stacked rings, 12 to 16 nm in diameter.

It is found in the cytoplasm. Molecular chaperone; assists the folding of proteins upon ATP hydrolysis. Known to play a role, in vitro, in the folding of actin and tubulin. This chain is T-complex protein 1 subunit zeta 1, found in Arabidopsis thaliana (Mouse-ear cress).